The following is a 380-amino-acid chain: N-acetylcysteine deacetylase (380 aa).

Ni(2+) contacts are provided by cysteine 98, histidine 100, glutamate 134, histidine 158, and histidine 350.

Belongs to the peptidase M20 family. The cofactor is a divalent metal cation.

The catalysed reaction is N-acetyl-L-cysteine + H2O = L-cysteine + acetate. The protein operates within amino-acid biosynthesis; L-cysteine biosynthesis. Probably catalyzes the deacetylation of N-acetylcysteine (NAC) to acetate and cysteine. Is involved in a S-(2-succino)cysteine (2SC) degradation pathway that allows B.subtilis to grow on 2SC as a sole sulfur source, via its metabolization to cysteine. The chain is N-acetylcysteine deacetylase from Bacillus subtilis (strain 168).